The sequence spans 119 residues: Autophagy-related protein 8A (119 aa).

Residue G117 is the site of Phosphatidylethanolamine amidated glycine attachment. Positions 118–119 are cleaved as a propeptide — removed in mature form; the sequence is SA.

It belongs to the ATG8 family. In terms of assembly, interacts with ATG4. Post-translationally, the C-terminal 2 residues are removed by ATG4 to expose Gly-117 at the C-terminus. The C-terminal Gly is then amidated with phosphatidylethanolamine by an activating system similar to that for ubiquitin. In terms of tissue distribution, constitutively expressed.

It localises to the cytoplasmic vesicle. It is found in the autophagosome membrane. The protein resides in the vacuole membrane. Its subcellular location is the cytoplasm. The protein localises to the cytoskeleton. In terms of biological role, ubiquitin-like modifier involved in cytoplasm to vacuole transport (Cvt) vesicles and autophagosomes formation. May mediate the delivery of the vesicles and autophagosomes to the vacuole via the microtubule cytoskeleton. Its function is as follows. Ubiquitin-like modifier involved in autophagosomes formation. May mediate the delivery of the autophagosomes to the vacuole via the microtubule cytoskeleton. In Oryza sativa subsp. indica (Rice), this protein is Autophagy-related protein 8A (ATG8A).